Reading from the N-terminus, the 299-residue chain is Methionine aminopeptidase (299 aa).

Histidine 64 contacts substrate. Residues aspartate 84, aspartate 95, and histidine 158 each contribute to the a divalent metal cation site. Histidine 166 serves as a coordination point for substrate. The a divalent metal cation site is built by glutamate 191 and glutamate 284.

Belongs to the peptidase M24A family. Methionine aminopeptidase archaeal type 2 subfamily. In terms of assembly, monomer. Co(2+) is required as a cofactor. Zn(2+) serves as cofactor. It depends on Mn(2+) as a cofactor. The cofactor is Fe(2+).

The catalysed reaction is Release of N-terminal amino acids, preferentially methionine, from peptides and arylamides.. Its function is as follows. Removes the N-terminal methionine from nascent proteins. The N-terminal methionine is often cleaved when the second residue in the primary sequence is small and uncharged (Met-Ala-, Cys, Gly, Pro, Ser, Thr, or Val). The sequence is that of Methionine aminopeptidase from Methanothermobacter thermautotrophicus (strain ATCC 29096 / DSM 1053 / JCM 10044 / NBRC 100330 / Delta H) (Methanobacterium thermoautotrophicum).